The following is a 385-amino-acid chain: Alkanesulfonate monooxygenase (385 aa).

This sequence belongs to the SsuD family.

It carries out the reaction an alkanesulfonate + FMNH2 + O2 = an aldehyde + FMN + sulfite + H2O + 2 H(+). In terms of biological role, catalyzes the desulfonation of aliphatic sulfonates. This Paraburkholderia phymatum (strain DSM 17167 / CIP 108236 / LMG 21445 / STM815) (Burkholderia phymatum) protein is Alkanesulfonate monooxygenase.